The following is a 200-amino-acid chain: Probable GTP-binding protein EngB (200 aa).

Residues 22-197 (NLPEYAFIGR…LDYIDSINRS (176 aa)) form the EngB-type G domain. GTP-binding positions include 30–37 (GRSNVGKS), 57–61 (GKTLL), 75–78 (DLPG), 142–145 (TKAD), and 173–178 (HFVSSS). Residues S37 and T59 each contribute to the Mg(2+) site.

The protein belongs to the TRAFAC class TrmE-Era-EngA-EngB-Septin-like GTPase superfamily. EngB GTPase family. Mg(2+) is required as a cofactor.

Necessary for normal cell division and for the maintenance of normal septation. This is Probable GTP-binding protein EngB from Phocaeicola vulgatus (strain ATCC 8482 / DSM 1447 / JCM 5826 / CCUG 4940 / NBRC 14291 / NCTC 11154) (Bacteroides vulgatus).